A 439-amino-acid polypeptide reads, in one-letter code: Secreted RxLR effector protein 117 (439 aa).

The N-terminal stretch at 1-21 (MRGAYYVLAALLVVASSQIAA) is a signal peptide. The RxLR-dEER motif lies at 48 to 65 (RYLRGGHDVHDDSANEER).

It belongs to the RxLR effector family.

Its subcellular location is the secreted. It localises to the host nucleus. Its function is as follows. Secreted effector that acts as an elicitor that induces cell death in host plant cells. In Plasmopara viticola (Downy mildew of grapevine), this protein is Secreted RxLR effector protein 117.